The chain runs to 363 residues: Histidinol-phosphate aminotransferase (363 aa).

N6-(pyridoxal phosphate)lysine is present on K220.

Belongs to the class-II pyridoxal-phosphate-dependent aminotransferase family. Histidinol-phosphate aminotransferase subfamily. As to quaternary structure, homodimer. Pyridoxal 5'-phosphate serves as cofactor.

It carries out the reaction L-histidinol phosphate + 2-oxoglutarate = 3-(imidazol-4-yl)-2-oxopropyl phosphate + L-glutamate. The protein operates within amino-acid biosynthesis; L-histidine biosynthesis; L-histidine from 5-phospho-alpha-D-ribose 1-diphosphate: step 7/9. The protein is Histidinol-phosphate aminotransferase of Chlorobium chlorochromatii (strain CaD3).